Consider the following 118-residue polypeptide: Ribonuclease P protein component (118 aa).

Belongs to the RnpA family. Consists of a catalytic RNA component (M1 or rnpB) and a protein subunit.

The enzyme catalyses Endonucleolytic cleavage of RNA, removing 5'-extranucleotides from tRNA precursor.. In terms of biological role, RNaseP catalyzes the removal of the 5'-leader sequence from pre-tRNA to produce the mature 5'-terminus. It can also cleave other RNA substrates such as 4.5S RNA. The protein component plays an auxiliary but essential role in vivo by binding to the 5'-leader sequence and broadening the substrate specificity of the ribozyme. The chain is Ribonuclease P protein component from Photobacterium profundum (strain SS9).